The sequence spans 80 residues: uncharacterized protein (80 aa).

This is an uncharacterized protein from Haemophilus influenzae (strain ATCC 51907 / DSM 11121 / KW20 / Rd).